The primary structure comprises 333 residues: UPF0284 protein VNG_1572C (333 aa).

This sequence belongs to the UPF0284 family.

The protein is UPF0284 protein VNG_1572C of Halobacterium salinarum (strain ATCC 700922 / JCM 11081 / NRC-1) (Halobacterium halobium).